Consider the following 380-residue polypeptide: Palmitoyltransferase ZDHHC18 (380 aa).

Residues 1–59 (MKDCEYQQISPGAAPPPASPGARRPGPAAPPAPSPGPAPGAPRWSGSGSGSGSLGRRPR) are disordered. The Cytoplasmic segment spans residues 1 to 82 (MKDCEYQQIS…CGGRLMLAGH (82 aa)). Ser19 carries the phosphoserine modification. Pro residues predominate over residues 27–40 (PAAPPAPSPGPAPG). Residues 83–103 (GGVFALTLLLILSTTILFFVF) traverse the membrane as a helical segment. At 104-111 (DCPYLART) the chain is on the lumenal side. Residues 112–132 (LTLAIPIIAAILFFFVMSCLL) form a helical membrane-spanning segment. The Cytoplasmic segment spans residues 133–227 (QTSFTDPGIL…GNCVGRRNYR (95 aa)). In terms of domain architecture, DHHC spans 184–234 (KYCFTCKMFRPPRTSHCSVCDNCVERFDHHCPWVGNCVGRRNYRFFYAFIL). Cys214 functions as the S-palmitoyl cysteine intermediate in the catalytic mechanism. Residues 228 to 248 (FFYAFILSLSFLTAFIFACVV) form a helical membrane-spanning segment. Topologically, residues 249 to 269 (THLTLLSQGSNFLSALKKTPA) are lumenal. The chain crosses the membrane as a helical span at residues 270–290 (SVLELVICFFSIWSILGLSGF). The Cytoplasmic segment spans residues 291 to 380 (HTYLVASNLT…PDASMVGGHP (90 aa)). The segment at 355 to 380 (ALPSPIRSDDPACGAKPDASMVGGHP) is disordered.

This sequence belongs to the DHHC palmitoyltransferase family. ERF2/ZDHHC9 subfamily. Ubiquitously expressed.

It localises to the golgi apparatus membrane. It carries out the reaction L-cysteinyl-[protein] + hexadecanoyl-CoA = S-hexadecanoyl-L-cysteinyl-[protein] + CoA. Its function is as follows. Palmitoyltransferase that catalyzes the addition of palmitate onto various protein substrates, such as CGAS, HRAS and LCK. Palmitoylates HRAS and LCK. Acts as a negative regulator of the cGAS-STING pathway be mediating palmitoylation and inactivation of CGAS. May also have a palmitoyltransferase activity toward the beta-2 adrenergic receptor/ADRB2 and therefore regulate G protein-coupled receptor signaling. The chain is Palmitoyltransferase ZDHHC18 from Mus musculus (Mouse).